The sequence spans 310 residues: HPr kinase/phosphorylase (310 aa).

Catalysis depends on residues histidine 138 and lysine 159. 153–160 is an ATP binding site; sequence GDSGIGKS. Serine 160 is a Mg(2+) binding site. Aspartate 177 functions as the Proton acceptor; for phosphorylation activity. Proton donor; for dephosphorylation activity in the catalytic mechanism. Residues 201–210 form an important for the catalytic mechanism of both phosphorylation and dephosphorylation region; that stretch reads LEIRGVGIID. Glutamate 202 is a binding site for Mg(2+). Arginine 243 is an active-site residue. The segment at 264–269 is important for the catalytic mechanism of dephosphorylation; that stretch reads PVKTGR.

The protein belongs to the HPrK/P family. In terms of assembly, homohexamer. It depends on Mg(2+) as a cofactor.

The enzyme catalyses [HPr protein]-L-serine + ATP = [HPr protein]-O-phospho-L-serine + ADP + H(+). The catalysed reaction is [HPr protein]-O-phospho-L-serine + phosphate + H(+) = [HPr protein]-L-serine + diphosphate. In terms of biological role, catalyzes the ATP- as well as the pyrophosphate-dependent phosphorylation of a specific serine residue in HPr, a phosphocarrier protein of the phosphoenolpyruvate-dependent sugar phosphotransferase system (PTS). HprK/P also catalyzes the pyrophosphate-producing, inorganic phosphate-dependent dephosphorylation (phosphorolysis) of seryl-phosphorylated HPr (P-Ser-HPr). The two antagonistic activities of HprK/P are regulated by several intracellular metabolites, which change their concentration in response to the absence or presence of rapidly metabolisable carbon sources (glucose, fructose, etc.) in the growth medium. Therefore, by controlling the phosphorylation state of HPr, HPrK/P is a sensor enzyme that plays a major role in the regulation of carbon metabolism and sugar transport: it mediates carbon catabolite repression (CCR), and regulates PTS-catalyzed carbohydrate uptake and inducer exclusion. The protein is HPr kinase/phosphorylase of Streptococcus uberis (strain ATCC BAA-854 / 0140J).